Here is a 56-residue protein sequence, read N- to C-terminus: Ribosome biogenesis protein Nop10 (56 aa).

It belongs to the NOP10 family.

Functionally, involved in ribosome biogenesis; more specifically in 18S rRNA pseudouridylation and in cleavage of pre-rRNA. This chain is Ribosome biogenesis protein Nop10, found in Saccharolobus islandicus (strain Y.N.15.51 / Yellowstone #2) (Sulfolobus islandicus).